Reading from the N-terminus, the 411-residue chain is Carbohydrate sulfotransferase 1 (411 aa).

Position 1 (M1) is a topological domain, cytoplasmic. Residues 2 to 23 (QCSWKAVLLLALASIAIQYTAI) form a helical; Signal-anchor for type II membrane protein membrane-spanning segment. The Lumenal portion of the chain corresponds to 24 to 411 (RTFTAKSFHT…VEERDFRPFL (388 aa)). N56 is a glycosylation site (N-linked (GlcNAc...) asparagine). Residue 69–75 (TRSGSSF) participates in 3'-phosphoadenylyl sulfate binding. 2 N-linked (GlcNAc...) asparagine glycosylation sites follow: N145 and N189. 234–242 (RDPRGILAS) is a 3'-phosphoadenylyl sulfate binding site. N-linked (GlcNAc...) asparagine glycosylation is present at N334. The short motif at 337 to 339 (RGD) is the Cell attachment site element.

Belongs to the sulfotransferase 1 family. Gal/GlcNAc/GalNAc subfamily.

It is found in the golgi apparatus membrane. It catalyses the reaction 3'-phosphoadenylyl sulfate + keratan = adenosine 3',5'-bisphosphate + keratan 6'-sulfate.. The protein operates within glycan metabolism. In terms of biological role, sulfotransferase that utilizes 3'-phospho-5'-adenylyl sulfate (PAPS) as sulfonate donor to catalyze the transfer of sulfate to position 6 of internal galactose (Gal) residues of keratan. Cooperates with B4GALT4 and B3GNT7 glycosyltransferases and CHST6 sulfotransferase to construct and elongate disulfated disaccharide unit [-&gt;3(6-sulfoGalbeta)1-&gt;4(6-sulfoGlcNAcbeta)1-&gt;] within keratan sulfate polymer. Has a preference for sulfating keratan sulfate, but it also transfers sulfate to the unsulfated polymer. Involved in biosynthesis of phosphacan, a major keratan sulfate proteoglycan in the developing brain. Involved in biosynthesis of 6-sulfoGalbeta-containing O-linked glycans in high endothelial venules of lymph nodes. May act in a synergistic manner with CHST4 to generate sialyl 6',6-disulfo Lewis X motif, a recognition determinant for immune cell receptors implicated in leukocyte trafficking. Catalyzes sulfation of N-acetyllactosamine (LacNAc) oligosaccharides with highest efficiency for sialylated LacNAc structures. The sequence is that of Carbohydrate sulfotransferase 1 (Chst1) from Rattus norvegicus (Rat).